Here is a 550-residue protein sequence, read N- to C-terminus: Arginine--tRNA ligase (550 aa).

The 'HIGH' region signature appears at 130-140; it reads ANPTGPIHIGG.

The protein belongs to the class-I aminoacyl-tRNA synthetase family. Monomer.

The protein localises to the cytoplasm. The enzyme catalyses tRNA(Arg) + L-arginine + ATP = L-arginyl-tRNA(Arg) + AMP + diphosphate. In Mycobacterium sp. (strain JLS), this protein is Arginine--tRNA ligase.